Consider the following 467-residue polypeptide: 26S proteasome regulatory subunit 7 homolog (467 aa).

2 disordered regions span residues methionine 1–isoleucine 26 and glycine 108–aspartate 140. Over residues threonine 117 to threonine 134 the composition is skewed to low complexity. Phosphoserine is present on residues serine 164 and serine 231. Position 250–257 (glycine 250–threonine 257) interacts with ATP.

It belongs to the AAA ATPase family. As to quaternary structure, interacts with UBR1 and CIC1. Post-translationally, the N-terminus is blocked.

It is found in the cytoplasm. Its subcellular location is the nucleus. Functionally, the 26S proteasome is involved in the ATP-dependent degradation of ubiquitinated proteins. The regulatory (or ATPase) complex confers ATP dependency and substrate specificity to the 26S complex. In Saccharomyces cerevisiae (strain ATCC 204508 / S288c) (Baker's yeast), this protein is 26S proteasome regulatory subunit 7 homolog (RPT1).